Reading from the N-terminus, the 242-residue chain is Protein GrpE (242 aa).

Positions Met1–Thr10 are enriched in polar residues. The tract at residues Met1–Lys64 is disordered. Over residues Lys11–Pro20 the composition is skewed to basic and acidic residues. 2 stretches are compositionally biased toward polar residues: residues Glu21–Glu32 and Asp40–Ser59.

The protein belongs to the GrpE family. In terms of assembly, homodimer.

Its subcellular location is the cytoplasm. Participates actively in the response to hyperosmotic and heat shock by preventing the aggregation of stress-denatured proteins, in association with DnaK and GrpE. It is the nucleotide exchange factor for DnaK and may function as a thermosensor. Unfolded proteins bind initially to DnaJ; upon interaction with the DnaJ-bound protein, DnaK hydrolyzes its bound ATP, resulting in the formation of a stable complex. GrpE releases ADP from DnaK; ATP binding to DnaK triggers the release of the substrate protein, thus completing the reaction cycle. Several rounds of ATP-dependent interactions between DnaJ, DnaK and GrpE are required for fully efficient folding. The polypeptide is Protein GrpE (Trichodesmium erythraeum (strain IMS101)).